A 1217-amino-acid polypeptide reads, in one-letter code: ATP-dependent helicase/nuclease subunit A (1217 aa).

Residues 10–475 (VIWTDAQWQS…IDLSQNFRSR (466 aa)) form the UvrD-like helicase ATP-binding domain. Residue 31–38 (AAAGSGKT) coordinates ATP. The UvrD-like helicase C-terminal domain occupies 476–786 (KEVLSTTNYI…RMMTIHSSKG (311 aa)).

The protein belongs to the helicase family. AddA subfamily. As to quaternary structure, heterodimer of AddA and AddB/RexB. Requires Mg(2+) as cofactor.

It carries out the reaction Couples ATP hydrolysis with the unwinding of duplex DNA by translocating in the 3'-5' direction.. The enzyme catalyses ATP + H2O = ADP + phosphate + H(+). In terms of biological role, the heterodimer acts as both an ATP-dependent DNA helicase and an ATP-dependent, dual-direction single-stranded exonuclease. Recognizes the chi site generating a DNA molecule suitable for the initiation of homologous recombination. The AddA nuclease domain is required for chi fragment generation; this subunit has the helicase and 3' -&gt; 5' nuclease activities. This Staphylococcus aureus (strain MW2) protein is ATP-dependent helicase/nuclease subunit A.